A 371-amino-acid polypeptide reads, in one-letter code: DNA primase DnaG (371 aa).

One can recognise a Toprim domain in the interval D173–P248. Mg(2+) is bound by residues E179, D221, and D223.

This sequence belongs to the archaeal DnaG primase family. In terms of assembly, forms a ternary complex with MCM helicase and DNA. Component of the archaeal exosome complex. The cofactor is Mg(2+).

It catalyses the reaction ssDNA + n NTP = ssDNA/pppN(pN)n-1 hybrid + (n-1) diphosphate.. Its function is as follows. RNA polymerase that catalyzes the synthesis of short RNA molecules used as primers for DNA polymerase during DNA replication. Also part of the exosome, which is a complex involved in RNA degradation. Acts as a poly(A)-binding protein that enhances the interaction between heteromeric, adenine-rich transcripts and the exosome. This is DNA primase DnaG from Nanoarchaeum equitans (strain Kin4-M).